The chain runs to 153 residues: Coiled-coil domain-containing protein 182 (153 aa).

Residues 46–109 (ADLEILQQKV…RLREEEDRGI (64 aa)) adopt a coiled-coil conformation.

The sequence is that of Coiled-coil domain-containing protein 182 (CCDC182) from Homo sapiens (Human).